Reading from the N-terminus, the 300-residue chain is Energy-coupling factor transporter ATP-binding protein EcfA2 (300 aa).

The 256-residue stretch at 3–258 (IKAKNIVKIY…NKFLIENKML (256 aa)) folds into the ABC transporter domain. 40-47 (GQTGSGKT) provides a ligand contact to ATP.

The protein belongs to the ABC transporter superfamily. Energy-coupling factor EcfA family. Forms a stable energy-coupling factor (ECF) transporter complex composed of 2 membrane-embedded substrate-binding proteins (S component), 2 ATP-binding proteins (A component) and 2 transmembrane proteins (T component).

The protein localises to the cell membrane. Functionally, ATP-binding (A) component of a common energy-coupling factor (ECF) ABC-transporter complex. Unlike classic ABC transporters this ECF transporter provides the energy necessary to transport a number of different substrates. The protein is Energy-coupling factor transporter ATP-binding protein EcfA2 of Mesomycoplasma hyopneumoniae (strain 7448) (Mycoplasma hyopneumoniae).